A 152-amino-acid polypeptide reads, in one-letter code: MDSKVVIYTDGACAGNPGPGGWGALLQFNDTSKEIFGYELDTTNNRMEITAALEALRILKKSCNVEIYTDSKYLQQGITAWIHNWIKNNWCKSNNEPVKNADLWQKLYAELSKHTIIWKWVKGHANNSGNIAADKLAVQGRETAIEILKCRG.

An RNase H type-1 domain is found at 1-142; sequence MDSKVVIYTD…ADKLAVQGRE (142 aa). Mg(2+) is bound by residues D10, E48, D70, and D134.

This sequence belongs to the RNase H family. Monomer. Requires Mg(2+) as cofactor.

It is found in the cytoplasm. The catalysed reaction is Endonucleolytic cleavage to 5'-phosphomonoester.. Functionally, endonuclease that specifically degrades the RNA of RNA-DNA hybrids. The sequence is that of Ribonuclease H from Rickettsia felis (strain ATCC VR-1525 / URRWXCal2) (Rickettsia azadi).